Here is a 73-residue protein sequence, read N- to C-terminus: MTAITPQEYMASLKEKYNLSATETLFDLPENLQLKFQVEFQKLIHPEQKHFTAVVKSINADGMTIFHRQIVLI.

This is an uncharacterized protein from Enterobacteria phage RB18 (Bacteriophage RB18).